Consider the following 242-residue polypeptide: NAD-dependent protein deacetylase (242 aa).

The 242-residue stretch at 1 to 242 (MQQFEEVHSI…EFVEGLSSRK (242 aa)) folds into the Deacetylase sirtuin-type domain. NAD(+)-binding residues include A23, T27, F34, R35, Q102, I104, D105, and H120. Position 34 (F34) interacts with nicotinamide. Residues I104 and D105 each contribute to the nicotinamide site. The active-site Proton acceptor is the H120. Positions 128, 131, 148, and 151 each coordinate Zn(2+). The NAD(+) site is built by T187, S188, N213, and I231.

Belongs to the sirtuin family. Class U subfamily. Requires Zn(2+) as cofactor.

The protein localises to the cytoplasm. It carries out the reaction N(6)-acetyl-L-lysyl-[protein] + NAD(+) + H2O = 2''-O-acetyl-ADP-D-ribose + nicotinamide + L-lysyl-[protein]. In terms of biological role, NAD-dependent protein deacetylase which modulates the activities of several enzymes which are inactive in their acetylated form. This Bacillus cereus (strain ATCC 10987 / NRS 248) protein is NAD-dependent protein deacetylase.